A 347-amino-acid polypeptide reads, in one-letter code: Methylthioribose-1-phosphate isomerase (347 aa).

Residues 45-47 (RGA), Arg88, and Gln197 each bind substrate. Asp238 (proton donor) is an active-site residue. Residue 248-249 (NK) coordinates substrate.

The protein belongs to the eIF-2B alpha/beta/delta subunits family. MtnA subfamily.

The enzyme catalyses 5-(methylsulfanyl)-alpha-D-ribose 1-phosphate = 5-(methylsulfanyl)-D-ribulose 1-phosphate. Its pathway is amino-acid biosynthesis; L-methionine biosynthesis via salvage pathway; L-methionine from S-methyl-5-thio-alpha-D-ribose 1-phosphate: step 1/6. Its function is as follows. Catalyzes the interconversion of methylthioribose-1-phosphate (MTR-1-P) into methylthioribulose-1-phosphate (MTRu-1-P). This chain is Methylthioribose-1-phosphate isomerase, found in Trichormus variabilis (strain ATCC 29413 / PCC 7937) (Anabaena variabilis).